The following is a 269-amino-acid chain: Type III pantothenate kinase (269 aa).

9–16 (DVGNTSVK) is a binding site for ATP. Residues Tyr-106 and 113 to 116 (GADR) each bind substrate. The active-site Proton acceptor is the Asp-115. K(+) is bound at residue Asp-137. Residue Thr-140 participates in ATP binding. Thr-193 provides a ligand contact to substrate.

Belongs to the type III pantothenate kinase family. As to quaternary structure, homodimer. NH4(+) is required as a cofactor. Requires K(+) as cofactor.

It is found in the cytoplasm. The catalysed reaction is (R)-pantothenate + ATP = (R)-4'-phosphopantothenate + ADP + H(+). The protein operates within cofactor biosynthesis; coenzyme A biosynthesis; CoA from (R)-pantothenate: step 1/5. Its function is as follows. Catalyzes the phosphorylation of pantothenate (Pan), the first step in CoA biosynthesis. The sequence is that of Type III pantothenate kinase from Lawsonia intracellularis (strain PHE/MN1-00).